Consider the following 284-residue polypeptide: Probable endonuclease 4 (284 aa).

Positions 66, 106, 142, 176, 179, 213, 226, 228, and 258 each coordinate Zn(2+).

It belongs to the AP endonuclease 2 family. Requires Zn(2+) as cofactor.

The catalysed reaction is Endonucleolytic cleavage to 5'-phosphooligonucleotide end-products.. In terms of biological role, endonuclease IV plays a role in DNA repair. It cleaves phosphodiester bonds at apurinic or apyrimidinic (AP) sites, generating a 3'-hydroxyl group and a 5'-terminal sugar phosphate. The polypeptide is Probable endonuclease 4 (Natranaerobius thermophilus (strain ATCC BAA-1301 / DSM 18059 / JW/NM-WN-LF)).